Reading from the N-terminus, the 219-residue chain is uncharacterized protein (219 aa).

Basic and acidic residues-rich tracts occupy residues 1 to 20 (METP…ESLR), 30 to 39 (AGRELVELRV), and 156 to 170 (QEVR…ELQR). A disordered region spans residues 1–195 (METPIEREIR…PSLTASRGDG (195 aa)).

It belongs to the MISP family.

This is an uncharacterized protein from Homo sapiens (Human).